Reading from the N-terminus, the 118-residue chain is Large ribosomal subunit protein bL20 (118 aa).

This sequence belongs to the bacterial ribosomal protein bL20 family.

Its function is as follows. Binds directly to 23S ribosomal RNA and is necessary for the in vitro assembly process of the 50S ribosomal subunit. It is not involved in the protein synthesizing functions of that subunit. The chain is Large ribosomal subunit protein bL20 from Nostoc punctiforme (strain ATCC 29133 / PCC 73102).